The sequence spans 731 residues: 1,4-alpha-glucan branching enzyme GlgB (731 aa).

The Nucleophile role is filled by aspartate 411. Residue glutamate 464 is the Proton donor of the active site.

This sequence belongs to the glycosyl hydrolase 13 family. GlgB subfamily. Monomer.

The catalysed reaction is Transfers a segment of a (1-&gt;4)-alpha-D-glucan chain to a primary hydroxy group in a similar glucan chain.. Its pathway is glycan biosynthesis; glycogen biosynthesis. In terms of biological role, catalyzes the formation of the alpha-1,6-glucosidic linkages in glycogen by scission of a 1,4-alpha-linked oligosaccharide from growing alpha-1,4-glucan chains and the subsequent attachment of the oligosaccharide to the alpha-1,6 position. This is 1,4-alpha-glucan branching enzyme GlgB from Mycolicibacterium paratuberculosis (strain ATCC BAA-968 / K-10) (Mycobacterium paratuberculosis).